The following is a 449-amino-acid chain: Adenylosuccinate lyase (449 aa).

N(6)-(1,2-dicarboxyethyl)-AMP contacts are provided by residues 9–10 (RY), 75–77 (KHD), and 102–103 (TS). Catalysis depends on His-150, which acts as the Proton donor/acceptor. Gln-224 is a binding site for N(6)-(1,2-dicarboxyethyl)-AMP. Ser-275 functions as the Proton donor/acceptor in the catalytic mechanism. Residues Ser-276, 281–283 (KMN), and 320–324 (SSERI) contribute to the N(6)-(1,2-dicarboxyethyl)-AMP site.

This sequence belongs to the lyase 1 family. Adenylosuccinate lyase subfamily. As to quaternary structure, homotetramer. Residues from neighboring subunits contribute catalytic and substrate-binding residues to each active site.

The catalysed reaction is N(6)-(1,2-dicarboxyethyl)-AMP = fumarate + AMP. It catalyses the reaction (2S)-2-[5-amino-1-(5-phospho-beta-D-ribosyl)imidazole-4-carboxamido]succinate = 5-amino-1-(5-phospho-beta-D-ribosyl)imidazole-4-carboxamide + fumarate. Its pathway is purine metabolism; AMP biosynthesis via de novo pathway; AMP from IMP: step 2/2. The protein operates within purine metabolism; IMP biosynthesis via de novo pathway; 5-amino-1-(5-phospho-D-ribosyl)imidazole-4-carboxamide from 5-amino-1-(5-phospho-D-ribosyl)imidazole-4-carboxylate: step 2/2. Functionally, catalyzes two reactions in de novo purine nucleotide biosynthesis. Catalyzes the breakdown of 5-aminoimidazole- (N-succinylocarboxamide) ribotide (SAICAR or 2-[5-amino-1-(5-phospho-beta-D-ribosyl)imidazole-4-carboxamido]succinate) to 5-aminoimidazole-4-carboxamide ribotide (AICAR or 5-amino-1-(5-phospho-beta-D-ribosyl)imidazole-4-carboxamide) and fumarate, and of adenylosuccinate (ADS or N(6)-(1,2-dicarboxyethyl)-AMP) to adenosine monophosphate (AMP) and fumarate. The polypeptide is Adenylosuccinate lyase (purB) (Methanothermobacter thermautotrophicus (strain ATCC 29096 / DSM 1053 / JCM 10044 / NBRC 100330 / Delta H) (Methanobacterium thermoautotrophicum)).